Reading from the N-terminus, the 351-residue chain is Soluble TNF receptor II (351 aa).

Positions 1-19 (MKSVLYSYILFLSCIIING) are cleaved as a signal peptide. TNFR-Cys repeat units lie at residues 31 to 67 (KCKDNEYNRHNLCCLSCPPGTYASRLCDSKTNTNTQC) and 69 to 110 (PCGS…NRIC). 6 cysteine pairs are disulfide-bonded: Cys32–Cys43, Cys44–Cys57, Cys47–Cys67, Cys70–Cys85, Cys88–Cys102, and Cys92–Cys110. Asn103, Asn191, and Asn250 each carry an N-linked (GlcNAc...) asparagine; by host glycan.

The protein belongs to the orthopoxvirus OPG002 family.

It is found in the secreted. Inhibits host immune defense by binding to host TNF and various chemokines in the extracellular space. Binds host CC chemokines (beta chemokines) and CXC chemokines (alpha chemokines). In Bos taurus (Bovine), this protein is Soluble TNF receptor II (OPG002).